The sequence spans 391 residues: Rhizopuspepsin-2 (391 aa).

Positions 1–21 (MKLTLISSCVALAFMALATEA) are cleaved as a signal peptide. The propeptide at 22 to 68 (APSGKKLSIPLTKNTNYKPSAKNAIQKALAKYHRFRTTSSSNSTSTE) is activation peptide. The region spanning 84 to 388 (YYGKVTVGTP…NQEVPEVQIA (305 aa)) is the Peptidase A1 domain. D102 is a catalytic residue. Residues C115 and C118 are joined by a disulfide bond. The active site involves D285. An intrachain disulfide couples C319 to C352.

The protein belongs to the peptidase A1 family.

It catalyses the reaction Hydrolysis of proteins with broad specificity similar to that of pepsin A, preferring hydrophobic residues at P1 and P1'. Clots milk and activates trypsinogen. Does not cleave 4-Gln-|-His-5, but does cleave 10-His-|-Leu-11 and 12-Val-|-Glu-13 in B chain of insulin.. This chain is Rhizopuspepsin-2, found in Rhizopus niveus.